The sequence spans 210 residues: Proteasome subunit beta (210 aa).

A propeptide spans 1–9 (MDNDKYLKG) (removed in mature form; by autocatalysis). Thr-10 acts as the Nucleophile in catalysis.

Belongs to the peptidase T1B family. As to quaternary structure, the 20S proteasome core is composed of 14 alpha and 14 beta subunits that assemble into four stacked heptameric rings, resulting in a barrel-shaped structure. The two inner rings, each composed of seven catalytic beta subunits, are sandwiched by two outer rings, each composed of seven alpha subunits. The catalytic chamber with the active sites is on the inside of the barrel. Has a gated structure, the ends of the cylinder being occluded by the N-termini of the alpha-subunits. Is capped at one or both ends by the proteasome regulatory ATPase, PAN.

It is found in the cytoplasm. The catalysed reaction is Cleavage of peptide bonds with very broad specificity.. With respect to regulation, the formation of the proteasomal ATPase PAN-20S proteasome complex, via the docking of the C-termini of PAN into the intersubunit pockets in the alpha-rings, triggers opening of the gate for substrate entry. Interconversion between the open-gate and close-gate conformations leads to a dynamic regulation of the 20S proteasome proteolysis activity. Functionally, component of the proteasome core, a large protease complex with broad specificity involved in protein degradation. This is Proteasome subunit beta from Methanosarcina thermophila.